Here is a 466-residue protein sequence, read N- to C-terminus: Soluble pyridine nucleotide transhydrogenase (466 aa).

E36–C45 lines the FAD pocket.

Belongs to the class-I pyridine nucleotide-disulfide oxidoreductase family. The cofactor is FAD.

It localises to the cytoplasm. It catalyses the reaction NAD(+) + NADPH = NADH + NADP(+). Conversion of NADPH, generated by peripheral catabolic pathways, to NADH, which can enter the respiratory chain for energy generation. The polypeptide is Soluble pyridine nucleotide transhydrogenase (Escherichia coli O6:K15:H31 (strain 536 / UPEC)).